Consider the following 566-residue polypeptide: O-fucosyltransferase 36 (566 aa).

Over residues 1–14 the composition is skewed to basic and acidic residues; sequence MERNSSDDEEDHQH. The tract at residues 1–37 is disordered; sequence MERNSSDDEEDHQHLIPQNDTRIRHREDSVSSNATTI. The chain crosses the membrane as a helical; Signal-anchor for type II membrane protein span at residues 66-86; sequence YVIVFVSLIISIGLLFLLTDP. Asparagine 93, asparagine 129, asparagine 138, asparagine 179, and asparagine 190 each carry an N-linked (GlcNAc...) asparagine glycan. Substrate-binding positions include 415–417 and 531–532; these read HFR and TF.

It belongs to the glycosyltransferase GT106 family.

It is found in the membrane. It participates in glycan metabolism. In Arabidopsis thaliana (Mouse-ear cress), this protein is O-fucosyltransferase 36.